The sequence spans 94 residues: Co-chaperonin GroES (94 aa).

This sequence belongs to the GroES chaperonin family. Heptamer of 7 subunits arranged in a ring. Interacts with the chaperonin GroEL.

It is found in the cytoplasm. Its function is as follows. Together with the chaperonin GroEL, plays an essential role in assisting protein folding. The GroEL-GroES system forms a nano-cage that allows encapsulation of the non-native substrate proteins and provides a physical environment optimized to promote and accelerate protein folding. GroES binds to the apical surface of the GroEL ring, thereby capping the opening of the GroEL channel. This is Co-chaperonin GroES from Geobacillus thermodenitrificans (strain NG80-2).